The following is a 291-amino-acid chain: tRNA N(3)-cytidine methyltransferase METTL8, mitochondrial (291 aa).

Residues 1 to 21 constitute a mitochondrion transit peptide; sequence MNMIWRNSISCLRLGKVPHRY. K80 is covalently cross-linked (Glycyl lysine isopeptide (Lys-Gly) (interchain with G-Cter in SUMO)). S-adenosyl-L-methionine contacts are provided by W89 and Y93. Positions 141–187 are disordered; it reads FSRMHCPTVPDEKNHYEKSSGSSEGQSKTESDFSNLDSEKHKKGPME. Over residues 159–168 the composition is skewed to low complexity; it reads SSGSSEGQSK. The S-adenosyl-L-methionine site is built by G204, D230, and D256.

It belongs to the methyltransferase superfamily. METL family. In terms of assembly, interacts with EP300.

The protein resides in the mitochondrion. It catalyses the reaction cytidine(32) in tRNA(Ser) + S-adenosyl-L-methionine = N(3)-methylcytidine(32) in tRNA(Ser) + S-adenosyl-L-homocysteine + H(+). It carries out the reaction cytidine(32) in tRNA(Thr) + S-adenosyl-L-methionine = N(3)-methylcytidine(32) in tRNA(Thr) + S-adenosyl-L-homocysteine + H(+). The enzyme catalyses a cytidine in mRNA + S-adenosyl-L-methionine = an N(3)-methylcytidine in mRNA + S-adenosyl-L-homocysteine + H(+). In terms of biological role, mitochondrial S-adenosyl-L-methionine-dependent methyltransferase that mediates N(3)-methylcytidine modification of residue 32 of the tRNA anticodon loop of mitochondrial tRNA(Ser)(UCN) and tRNA(Thr). N(3)-methylcytidine methylation modification regulates mitochondrial translation efficiency and is required for activity of the respiratory chain. N(3)-methylcytidine methylation of mitochondrial tRNA(Ser)(UCN) requires the formation of N(6)-dimethylallyladenosine(37) (i6A37) by TRIT1 as prerequisite. May also mediate N(3)-methylcytidine modification of mRNAs. The existence of N(3)-methylcytidine modification on mRNAs is however unclear, and additional evidences are required to confirm the role of the N(3)-methylcytidine-specific mRNA methyltransferase activity of METTL8 in vivo. The sequence is that of tRNA N(3)-cytidine methyltransferase METTL8, mitochondrial from Homo sapiens (Human).